We begin with the raw amino-acid sequence, 117 residues long: Ribonuclease P protein component (117 aa).

Belongs to the RnpA family. As to quaternary structure, consists of a catalytic RNA component (M1 or rnpB) and a protein subunit.

It carries out the reaction Endonucleolytic cleavage of RNA, removing 5'-extranucleotides from tRNA precursor.. In terms of biological role, RNaseP catalyzes the removal of the 5'-leader sequence from pre-tRNA to produce the mature 5'-terminus. It can also cleave other RNA substrates such as 4.5S RNA. The protein component plays an auxiliary but essential role in vivo by binding to the 5'-leader sequence and broadening the substrate specificity of the ribozyme. The chain is Ribonuclease P protein component from Thermotoga sp. (strain RQ2).